The primary structure comprises 89 residues: Cell division protein FtsL (89 aa).

Topologically, residues 1 to 6 (MAMNKL) are cytoplasmic. The chain crosses the membrane as a helical span at residues 7–24 (NFLLLLAVCVSAFSVVMQ). Residues 25 to 89 (QNQYRLNFTA…GNTFMVEHQR (65 aa)) lie on the Periplasmic side of the membrane. Positions 33–73 (TALDKAKKQEIALEQDYAQMRLQQARLANHEAIRAAAEKQN) form a coiled coil.

It belongs to the FtsL family. In terms of assembly, part of a complex composed of FtsB, FtsL and FtsQ.

It is found in the cell inner membrane. Functionally, essential cell division protein. May link together the upstream cell division proteins, which are predominantly cytoplasmic, with the downstream cell division proteins, which are predominantly periplasmic. In Neisseria meningitidis serogroup B (strain ATCC BAA-335 / MC58), this protein is Cell division protein FtsL.